Consider the following 462-residue polypeptide: L-seryl-tRNA(Sec) selenium transferase (462 aa).

Lys-294 carries the post-translational modification N6-(pyridoxal phosphate)lysine.

This sequence belongs to the SelA family. As to quaternary structure, homodecamer; pentamer of dimers. Binds only one seryl-tRNA(Sec) per dimer. Requires pyridoxal 5'-phosphate as cofactor.

It is found in the cytoplasm. It catalyses the reaction L-seryl-tRNA(Sec) + selenophosphate + H(+) = L-selenocysteinyl-tRNA(Sec) + phosphate. The protein operates within aminoacyl-tRNA biosynthesis; selenocysteinyl-tRNA(Sec) biosynthesis; selenocysteinyl-tRNA(Sec) from L-seryl-tRNA(Sec) (bacterial route): step 1/1. Its function is as follows. Converts seryl-tRNA(Sec) to selenocysteinyl-tRNA(Sec) required for selenoprotein biosynthesis. In Yersinia enterocolitica serotype O:8 / biotype 1B (strain NCTC 13174 / 8081), this protein is L-seryl-tRNA(Sec) selenium transferase.